The chain runs to 68 residues: uncharacterized protein (68 aa).

Residues 1 to 15 (MTIIFLICLDASTQS) form the signal peptide. A disordered region spans residues 14–68 (QSTTNNSINNNNNNNNNNNNNNNNNNNNNNNNNNNNNNNNNNNNNNSKVFDFNIF). Residues Asn18 and Asn58 are each glycosylated (N-linked (GlcNAc...) asparagine). A compositionally biased stretch (low complexity) spans 22–59 (NNNNNNNNNNNNNNNNNNNNNNNNNNNNNNNNNNNNNN).

It is found in the secreted. This is an uncharacterized protein from Dictyostelium discoideum (Social amoeba).